Consider the following 458-residue polypeptide: Smoothelin-like protein 2 (458 aa).

Residues 24 to 88 (LEGAVRALHE…RQVESLGLTT (65 aa)) adopt a coiled-coil conformation. 3 disordered regions span residues 87-111 (TTGLAPAPGTPSPPPAPGVPNRAPR), 123-142 (FSLSGRSQSLDHHDEASELE), and 151-312 (IIEN…GAQA). The span at 94–104 (PGTPSPPPAPG) shows a compositional bias: pro residues. Threonine 96 is modified (phosphothreonine). Phosphoserine occurs at positions 98, 126, and 131. Positions 131–142 (SLDHHDEASELE) are enriched in basic and acidic residues. 2 stretches are compositionally biased toward low complexity: residues 158 to 167 (PGADPGDGPP) and 209 to 220 (TSATALSPTSAA). The span at 225 to 244 (LSSSPSEATTPWTPSPSEKN) shows a compositional bias: polar residues. Residues 245–254 (SSLPRSLSSS) show a composition bias toward low complexity. Phosphoserine occurs at positions 252, 254, and 267. A compositionally biased stretch (pro residues) spans 270 to 283 (LVTPPQSPPSPQPP). Phosphothreonine is present on threonine 272. A Phosphoserine modification is found at serine 276. Residues 290–299 (RPGERRRELV) are compositionally biased toward basic and acidic residues. The segment covering 300–310 (RSQTLPRTSGA) has biased composition (polar residues). The residue at position 341 (serine 341) is a Phosphoserine. A Calponin-homology (CH) domain is found at 348–455 (SSIKQILLEW…YVQSLYNHLR (108 aa)).

The protein belongs to the smoothelin family.

The sequence is that of Smoothelin-like protein 2 (SMTNL2) from Bos taurus (Bovine).